Consider the following 643-residue polypeptide: 3D-(3,5/4)-trihydroxycyclohexane-1,2-dione hydrolase (643 aa).

Residue E65 coordinates thiamine diphosphate. The segment at 441–521 (SLPGDLQRMW…VNVLLFDNCG (81 aa)) is thiamine pyrophosphate binding. Mg(2+) contacts are provided by D492 and N519.

Belongs to the TPP enzyme family. Mg(2+) serves as cofactor. The cofactor is thiamine diphosphate.

It catalyses the reaction 3D-3,5/4-trihydroxycyclohexane-1,2-dione + H2O = 5-deoxy-D-glucuronate + H(+). The protein operates within polyol metabolism; myo-inositol degradation into acetyl-CoA; acetyl-CoA from myo-inositol: step 3/7. Its function is as follows. Involved in the cleavage of the C1-C2 bond of 3D-(3,5/4)-trihydroxycyclohexane-1,2-dione (THcHDO) to yield 5-deoxy-glucuronate (5DG). The chain is 3D-(3,5/4)-trihydroxycyclohexane-1,2-dione hydrolase from Clostridium botulinum (strain Eklund 17B / Type B).